Reading from the N-terminus, the 414-residue chain is MALISLAIDYKKSPIEVRSEFALSGLDVSMLYRSILAIDNVVHAVILSTCNRTEVYLEISDLRVVDDILVWWQGYVRNPNYKIKDYFKLRQGTEVIMHLMKLACGLESMVLGEPQILGQVKDSYTLSKKNHAIGKELDRVFQKVFATAKRVRSETRIGHCPVSVAFSAITLAKRQLDNISSKNVLIIGAGQTGELLFRHVTALAPKQIMLANRTIEKAQKITSAFRNASAHYLSELPQLIKKADIIIAAVNVLEYIVTCKYVGDKPRVFIDISIPQALDPKLGELEQNVYYCVDDINAVIEDNKDKRKYESSKAQKIIVKSLEEYLEKEKAIISNSAIKELFQKADGLVDLSLEKSLAKIRNGKDAEEIIKRFAYEIKKKVLHYPVVGMKEASKQGRSDCLVCMKRMFGLNVEK.

Substrate contacts are provided by residues 49–52, S108, 113–115, and Q119; these read TCNR and EPQ. C50 acts as the Nucleophile in catalysis. 188-193 contributes to the NADP(+) binding site; the sequence is GAGQTG.

This sequence belongs to the glutamyl-tRNA reductase family. As to quaternary structure, homodimer.

The enzyme catalyses (S)-4-amino-5-oxopentanoate + tRNA(Glu) + NADP(+) = L-glutamyl-tRNA(Glu) + NADPH + H(+). It functions in the pathway porphyrin-containing compound metabolism; protoporphyrin-IX biosynthesis; 5-aminolevulinate from L-glutamyl-tRNA(Glu): step 1/2. In terms of biological role, catalyzes the NADPH-dependent reduction of glutamyl-tRNA(Glu) to glutamate 1-semialdehyde (GSA). This is Glutamyl-tRNA reductase from Francisella tularensis subsp. tularensis (strain WY96-3418).